The primary structure comprises 456 residues: UDP-N-acetylmuramate--L-alanine ligase (456 aa).

117-123 (GTHGKTT) is an ATP binding site.

This sequence belongs to the MurCDEF family.

The protein resides in the cytoplasm. It catalyses the reaction UDP-N-acetyl-alpha-D-muramate + L-alanine + ATP = UDP-N-acetyl-alpha-D-muramoyl-L-alanine + ADP + phosphate + H(+). The protein operates within cell wall biogenesis; peptidoglycan biosynthesis. In terms of biological role, cell wall formation. In Clostridium tetani (strain Massachusetts / E88), this protein is UDP-N-acetylmuramate--L-alanine ligase.